We begin with the raw amino-acid sequence, 557 residues long: 2-isopropylmalate synthase (557 aa).

Residues 33 to 307 (PIWCSSDLRD…DPQLDFSDID (275 aa)) enclose the Pyruvate carboxyltransferase domain. Residues Asp-42, His-246, His-248, and Asn-282 each coordinate Mg(2+). The regulatory domain stretch occupies residues 439-557 (ANAPYALVSH…SLSQQQAKAA (119 aa)).

It belongs to the alpha-IPM synthase/homocitrate synthase family. LeuA type 2 subfamily. Homodimer. It depends on Mg(2+) as a cofactor.

The protein resides in the cytoplasm. The enzyme catalyses 3-methyl-2-oxobutanoate + acetyl-CoA + H2O = (2S)-2-isopropylmalate + CoA + H(+). It participates in amino-acid biosynthesis; L-leucine biosynthesis; L-leucine from 3-methyl-2-oxobutanoate: step 1/4. In terms of biological role, catalyzes the condensation of the acetyl group of acetyl-CoA with 3-methyl-2-oxobutanoate (2-ketoisovalerate) to form 3-carboxy-3-hydroxy-4-methylpentanoate (2-isopropylmalate). This Pseudomonas entomophila (strain L48) protein is 2-isopropylmalate synthase.